A 551-amino-acid chain; its full sequence is uncharacterized protein (551 aa).

Disordered stretches follow at residues 66–111 (GNNK…STNL), 130–165 (PEATGLMKEDITPVVNTSKQSSTGTQEESSKPEKSN), 180–229 (AFNP…LSNL), and 277–303 (AFTSPRLPSPPQSTRPSSTRFPSVPLS). Serine 74 is modified (phosphoserine). 2 stretches are compositionally biased toward polar residues: residues 92–111 (GFSNRESMSENCFSKSSTNL) and 143–156 (VVNTSKQSSTGTQE). The span at 182 to 193 (NPSSVLPSNSSS) shows a compositional bias: low complexity. The span at 204 to 226 (KETYQPNTFRRSPLKNDTGSVEL) shows a compositional bias: polar residues. Residues 290–299 (TRPSSTRFPS) show a composition bias toward low complexity.

This is an uncharacterized protein from Schizosaccharomyces pombe (strain 972 / ATCC 24843) (Fission yeast).